The primary structure comprises 296 residues: Polyamine aminopropyltransferase (296 aa).

Residues 5-238 (ELWYETLHAN…GIMTFAWATQ (234 aa)) enclose the PABS domain. Gln33 contacts S-methyl-5'-thioadenosine. His64 and Asp88 together coordinate spermidine. Residues Glu108 and 140–141 (DG) each bind S-methyl-5'-thioadenosine. The active-site Proton acceptor is the Asp158. 158-161 (DCTD) serves as a coordination point for spermidine. Pro165 is an S-methyl-5'-thioadenosine binding site.

The protein belongs to the spermidine/spermine synthase family. In terms of assembly, homodimer or homotetramer.

The protein resides in the cytoplasm. It carries out the reaction S-adenosyl 3-(methylsulfanyl)propylamine + putrescine = S-methyl-5'-thioadenosine + spermidine + H(+). Its pathway is amine and polyamine biosynthesis; spermidine biosynthesis; spermidine from putrescine: step 1/1. In terms of biological role, catalyzes the irreversible transfer of a propylamine group from the amino donor S-adenosylmethioninamine (decarboxy-AdoMet) to putrescine (1,4-diaminobutane) to yield spermidine. This Yersinia pseudotuberculosis serotype O:1b (strain IP 31758) protein is Polyamine aminopropyltransferase.